The primary structure comprises 535 residues: Thermosome subunit gamma (535 aa).

This sequence belongs to the TCP-1 chaperonin family. In terms of assembly, forms a heterooligomeric complex of two stacked nine-membered rings; one of alpha and the other of beta subunits.

It is found in the cytoplasm. The enzyme catalyses ATP + H2O = ADP + phosphate + H(+). Its function is as follows. Molecular chaperone; binds unfolded polypeptides in vitro, and has a weak ATPase activity. This is Thermosome subunit gamma (thsC) from Saccharolobus shibatae (strain ATCC 51178 / DSM 5389 / JCM 8931 / NBRC 15437 / B12) (Sulfolobus shibatae).